Reading from the N-terminus, the 299-residue chain is Protease HtpX homolog (299 aa).

Transmembrane regions (helical) follow at residues 14-34 (WLLL…VGYL) and 39-59 (GFGG…TMIF). Zn(2+) is bound at residue His-143. Glu-144 is an active-site residue. His-147 contributes to the Zn(2+) binding site. 2 helical membrane-spanning segments follow: residues 153–173 (IRIS…AVMA) and 198–218 (IILL…ATLV). Glu-227 contacts Zn(2+).

Belongs to the peptidase M48B family. Requires Zn(2+) as cofactor.

Its subcellular location is the cell membrane. In Streptococcus thermophilus (strain ATCC BAA-491 / LMD-9), this protein is Protease HtpX homolog.